The chain runs to 264 residues: MALLQLERISAQYPGAAEPVLADISLTLGPQQLLVALGPSGSGKTSLLNLIAGFVEPSAGRIQLDGVPVQGPSAERGVVFQDDALLPWQDVLGNVAFGLELAGVARDKREARAREMLALVDLAGFDKRRIWQLSGGQKQRVGLARALAADPRVLLMDEPFGALDAFTREQMQELLLQVWRRTAKPVFLITHDIEEAVFLATDLILLAPNPGQIVERLNLDFGQRYAAGESARAIKSDPRFIETREHVLARVFSQRSATQQQERP.

Residues 4 to 233 (LQLERISAQY…RYAAGESARA (230 aa)) form the ABC transporter domain. 38–45 (GPSGSGKT) contacts ATP.

Belongs to the ABC transporter superfamily. Taurine importer (TC 3.A.1.17.1) family. In terms of assembly, the complex is composed of two ATP-binding proteins (TauB), two transmembrane proteins (TauC) and a solute-binding protein (TauA).

Its subcellular location is the cell inner membrane. The catalysed reaction is taurine(out) + ATP + H2O = taurine(in) + ADP + phosphate + H(+). Its function is as follows. Part of the ABC transporter complex TauABC involved in taurine import. Responsible for energy coupling to the transport system. The polypeptide is Taurine import ATP-binding protein TauB (Pseudomonas fluorescens (strain ATCC BAA-477 / NRRL B-23932 / Pf-5)).